The chain runs to 425 residues: Monoacylglycerol lipase ABHD2 (425 aa).

The Cytoplasmic segment spans residues 1-9 (MNAMLETPE). Residues 10–30 (LPAVFDGVKLAAVAAVLYVIV) form a helical; Signal-anchor for type II membrane protein membrane-spanning segment. The Extracellular segment spans residues 31 to 425 (RCLNLKSPTA…DTEQMEAELE (395 aa)). The AB hydrolase-1 domain maps to 128 to 382 (MVICPGIANH…HGGHLGFFEG (255 aa)). An N-linked (GlcNAc...) asparagine glycan is attached at N136. S207 serves as the catalytic Nucleophile. Residues D345 and H376 each act as charge relay system in the active site. An N-linked (GlcNAc...) asparagine glycan is attached at N410.

Belongs to the AB hydrolase superfamily. AB hydrolase 4 family. As to expression, widely expressed with higher expression in testis. Expressed by vascular smooth muscle cells, non vascular smooth muscle cells and heart.

Its subcellular location is the cell membrane. It is found in the cytoplasmic vesicle. It localises to the secretory vesicle. The protein localises to the acrosome membrane. It catalyses the reaction Hydrolyzes glycerol monoesters of long-chain fatty acids.. It carries out the reaction an acetyl ester + H2O = an aliphatic alcohol + acetate + H(+). The catalysed reaction is a triacylglycerol + H2O = a diacylglycerol + a fatty acid + H(+). The enzyme catalyses 2-(5Z,8Z,11Z,14Z-eicosatetraenoyl)-glycerol + H2O = glycerol + (5Z,8Z,11Z,14Z)-eicosatetraenoate + H(+). It catalyses the reaction a butanoate ester + H2O = an aliphatic alcohol + butanoate + H(+). It carries out the reaction hexadecanoate ester + H2O = an aliphatic alcohol + hexadecanoate + H(+). Acylglycerol lipase activity is activated upon binding to progesterone. Functionally, progesterone-dependent acylglycerol lipase that catalyzes hydrolysis of endocannabinoid arachidonoylglycerol (AG) from cell membrane. Acts as a progesterone receptor: progesterone-binding activates the acylglycerol lipase activity, mediating degradation of 1-arachidonoylglycerol (1AG) and 2-arachidonoylglycerol (2AG) to glycerol and arachidonic acid (AA). Also displays an ester hydrolase activity against acetyl ester, butanoate ester and hexadecanoate ester. Plays a key role in sperm capacitation in response to progesterone by mediating degradation of 2AG, an inhibitor of the sperm calcium channel CatSper, leading to calcium influx via CatSper and sperm activation. Involved in acrosomal reaction. May also play a role in smooth muscle cells migration. The chain is Monoacylglycerol lipase ABHD2 (Abhd2) from Mus musculus (Mouse).